A 284-amino-acid chain; its full sequence is RNase adapter protein RapZ (284 aa).

Residue glycine 8–serine 15 participates in ATP binding. Residue aspartate 56–asparagine 59 coordinates GTP. An RNA-binding region spans residues arginine 266–threonine 284.

This sequence belongs to the RapZ-like family. RapZ subfamily. Homotrimer.

Functionally, modulates the synthesis of GlmS, by affecting the processing and stability of the regulatory small RNA GlmZ. When glucosamine-6-phosphate (GlcN6P) concentrations are high in the cell, RapZ binds GlmZ and targets it to cleavage by RNase E. Consequently, GlmZ is inactivated and unable to activate GlmS synthesis. Under low GlcN6P concentrations, RapZ is sequestered and inactivated by an other regulatory small RNA, GlmY, preventing GlmZ degradation and leading to synthesis of GlmS. The protein is RNase adapter protein RapZ of Salmonella typhimurium (strain LT2 / SGSC1412 / ATCC 700720).